The following is an 854-amino-acid chain: Nucleolar MIF4G domain-containing protein 1 homolog (854 aa).

Disordered regions lie at residues 1-38 (MAKI…FAGK), 55-105 (QSQL…DAEV), 120-161 (PLGK…KQRI), and 217-306 (RKWE…RDAE). Basic and acidic residues predominate over residues 15–28 (TRKEQRKQKSEFKK). The span at 60–71 (KNKKKKRSKKPK) shows a compositional bias: basic residues. The segment covering 88 to 105 (IDSDDDESIDSDFSDAEV) has biased composition (acidic residues). Composition is skewed to basic and acidic residues over residues 135–156 (RQDE…ESKS) and 217–238 (RKWE…KEEA). The span at 242–289 (SDEEEDKEDRDEPMDNFSEDDSGSEGEDDDEDLTGEEEQSEEDSEQEE) shows a compositional bias: acidic residues. Positions 290–306 (NAPKIKEDIYGRKRDAE) are enriched in basic and acidic residues. One can recognise an MIF4G domain in the interval 352–553 (LKQCKGLLNR…DILNAVKNNN (202 aa)). The 115-residue stretch at 650-764 (AERRNIFCII…QLSVLKVVDF (115 aa)) folds into the MI domain.

It belongs to the CWC22 family.

The protein localises to the nucleus. Its subcellular location is the nucleolus. This is Nucleolar MIF4G domain-containing protein 1 homolog from Drosophila melanogaster (Fruit fly).